Consider the following 643-residue polypeptide: Threonine--tRNA ligase (643 aa).

One can recognise a TGS domain in the interval 1–61 (MPIITLPDGA…SVNANINIIT (61 aa)). The tract at residues 242 to 533 (DHRKIGKKLD…LIEEYEGKFP (292 aa)) is catalytic. Residues Cys333, His384, and His510 each coordinate Zn(2+).

Belongs to the class-II aminoacyl-tRNA synthetase family. Homodimer. Zn(2+) serves as cofactor.

It is found in the cytoplasm. It carries out the reaction tRNA(Thr) + L-threonine + ATP = L-threonyl-tRNA(Thr) + AMP + diphosphate + H(+). In terms of biological role, catalyzes the attachment of threonine to tRNA(Thr) in a two-step reaction: L-threonine is first activated by ATP to form Thr-AMP and then transferred to the acceptor end of tRNA(Thr). Also edits incorrectly charged L-seryl-tRNA(Thr). The sequence is that of Threonine--tRNA ligase from Prochlorococcus marinus (strain SARG / CCMP1375 / SS120).